The chain runs to 127 residues: Glycine cleavage system H protein 1 (127 aa).

A Lipoyl-binding domain is found at 20–101 (SVTVGITPYA…LGAGWFFRFI (82 aa)). Residue Lys-60 is modified to N6-lipoyllysine.

The protein belongs to the GcvH family. In terms of assembly, the glycine cleavage system is composed of four proteins: P, T, L and H. (R)-lipoate is required as a cofactor.

Functionally, the glycine cleavage system catalyzes the degradation of glycine. The H protein shuttles the methylamine group of glycine from the P protein to the T protein. This is Glycine cleavage system H protein 1 from Pseudomonas syringae pv. tomato (strain ATCC BAA-871 / DC3000).